Consider the following 382-residue polypeptide: Alanine racemase (382 aa).

The active-site Proton acceptor; specific for D-alanine is Lys-37. At Lys-37 the chain carries N6-(pyridoxal phosphate)lysine. Substrate is bound at residue Arg-135. Catalysis depends on Tyr-267, which acts as the Proton acceptor; specific for L-alanine. Residue Met-315 coordinates substrate.

It belongs to the alanine racemase family. The cofactor is pyridoxal 5'-phosphate.

It carries out the reaction L-alanine = D-alanine. The protein operates within amino-acid biosynthesis; D-alanine biosynthesis; D-alanine from L-alanine: step 1/1. Functionally, catalyzes the interconversion of L-alanine and D-alanine. May also act on other amino acids. This is Alanine racemase (alr) from Geobacter sulfurreducens (strain ATCC 51573 / DSM 12127 / PCA).